Reading from the N-terminus, the 608-residue chain is Zinc metalloproteinase-disintegrin-like agkihagin (608 aa).

The first 20 residues, 1-20 (MIQVLLVTICLAAFPYQGSS), serve as a signal peptide directing secretion. Positions 21 to 189 (IILESGNVND…KKASQSNLTP (169 aa)) are excised as a propeptide. The 197-residue stretch at 199–395 (KFVKLFLVAD…NMPQCILKKP (197 aa)) folds into the Peptidase M12B domain. 3 disulfide bridges follow: cysteine 310-cysteine 390, cysteine 350-cysteine 374, and cysteine 352-cysteine 357. Histidine 335 lines the Zn(2+) pocket. The active site involves glutamate 336. Positions 339 and 345 each coordinate Zn(2+). Positions 403–488 (PPVCGNYFVE…ADCTDRFQKN (86 aa)) constitute a Disintegrin domain. Ca(2+) contacts are provided by valine 405, asparagine 408, phenylalanine 410, glutamate 412, glutamate 415, and aspartate 418. 14 disulfides stabilise this stretch: cysteine 406–cysteine 435, cysteine 417–cysteine 430, cysteine 419–cysteine 425, cysteine 429–cysteine 452, cysteine 443–cysteine 449, cysteine 448–cysteine 474, cysteine 461–cysteine 481, cysteine 468–cysteine 499, cysteine 492–cysteine 504, cysteine 511–cysteine 561, cysteine 526–cysteine 570, cysteine 539–cysteine 549, cysteine 556–cysteine 596, and cysteine 590–cysteine 601. Residues 467 to 469 (ECD) carry the D/ECD-tripeptide motif. Ca(2+) contacts are provided by aspartate 469, methionine 470, aspartate 472, aspartate 483, and arginine 484. A glycan (N-linked (GlcNAc...) asparagine) is linked at asparagine 501.

This sequence belongs to the venom metalloproteinase (M12B) family. P-III subfamily. P-IIIc sub-subfamily. In terms of assembly, homodimer; disulfide-linked. Requires Zn(2+) as cofactor. As to expression, expressed by the venom gland.

It localises to the secreted. With respect to regulation, inhibited by EDTA and EGTA. Not inhibited by PMSF, antipain, pepstatin, and iodoacetamide. Functionally, strongly inhibits the collagen-induced human platelet aggregation. Hydrolyzes the Aalpha-chain of fibrinogen (FGA), without cleavage of Bbeta- and gamma-chains. Induces apoptosis and strongly inhibits proliferation of endothelial cells as well as adhesion of the cells to extracellular matrix proteins. The protein is Zinc metalloproteinase-disintegrin-like agkihagin of Deinagkistrodon acutus (Hundred-pace snake).